We begin with the raw amino-acid sequence, 276 residues long: MESTIGIDAGGTLTKIAYLNEKKKLTFEKFYSNEQDKIIDWLKKQISIKQICITGGKAKQLQQLLSDSYKIVELNEFEATLVGVRYILKEEKYDINNFVLTNIGTGTSIHYIYNDRYIRAGGTGVGGGTIMGLSKLLTNIDHFEDVIPLTKVGSRKDLDITVGDIYGGILSPIDNSLTASNFGKAATIESNYNNSDILATVQGLVGEVVTALSLQFAETKNIDHIIYIGSTLCNNIHLQNIISSYTKYQNKTPIFLRDGGNSGAIGALLHATNKKS.

8–15 (DAGGTLTK) provides a ligand contact to ATP. The Proton acceptor role is filled by E76. ATP is bound by residues T105, 127–131 (GGTIM), F143, and S230.

This sequence belongs to the type II pantothenate kinase family. In terms of assembly, homodimer.

It is found in the cytoplasm. It catalyses the reaction (R)-pantothenate + ATP = (R)-4'-phosphopantothenate + ADP + H(+). It participates in cofactor biosynthesis; coenzyme A biosynthesis; CoA from (R)-pantothenate: step 1/5. Its function is as follows. Catalyzes the phosphorylation of pantothenate (Pan), the first step in CoA biosynthesis. This Bacillus thuringiensis subsp. konkukian (strain 97-27) protein is Type II pantothenate kinase.